Reading from the N-terminus, the 856-residue chain is Genome polyprotein (856 aa).

The Peptidase S30 domain maps to 141 to 284 (KLTEGQMNHL…QSVLNSMIQF (144 aa)). Residues His192, Asp201, and Ser235 each act as for P1 proteinase activity in the active site. The Involved in interaction with stylet and aphid transmission signature appears at 334–337 (KITC). The Involved in virions binding and aphid transmission motif lies at 592–594 (PTK). One can recognise a Peptidase C6 domain in the interval 618 to 740 (LYIAKQGYCY…ESDIKHYRVG (123 aa)). Active-site for helper component proteinase activity residues include Cys626 and His699.

Belongs to the potyviridae genome polyprotein family. In terms of processing, genome polyprotein of potyviruses undergoes post-translational proteolytic processing by the main proteinase NIa-pro resulting in the production of at least ten individual proteins. The P1 proteinase and the HC-pro cleave only their respective C-termini autocatalytically. 6K1 is essential for proper proteolytic separation of P3 from CI.

It catalyses the reaction Hydrolyzes a Gly-|-Gly bond at its own C-terminus, commonly in the sequence -Tyr-Xaa-Val-Gly-|-Gly, in the processing of the potyviral polyprotein.. Its function is as follows. Required for aphid transmission and also has proteolytic activity. Only cleaves a Gly-Gly dipeptide at its own C-terminus. Interacts with virions and aphid stylets. Acts as a suppressor of RNA-mediated gene silencing, also known as post-transcriptional gene silencing (PTGS), a mechanism of plant viral defense that limits the accumulation of viral RNAs. May have RNA-binding activity. The sequence is that of Genome polyprotein from Potato virus Y (strain O) (PVY).